The following is a 148-amino-acid chain: uncharacterized protein (148 aa).

The first 22 residues, 1–22 (MVQTVLNSVWLWRSVLLRLTFS), serve as a signal peptide directing secretion.

This is an uncharacterized protein from Saccharomyces cerevisiae (strain ATCC 204508 / S288c) (Baker's yeast).